Consider the following 314-residue polypeptide: Mitochondrial thiamine pyrophosphate carrier 1 (314 aa).

Transmembrane regions (helical) follow at residues 14 to 30 (VAAW…GLLA), 84 to 100 (LLYV…YSLF), 116 to 136 (LVVG…FDVL), 170 to 186 (GSIA…SIMF), 217 to 233 (SAGT…TFPL), and 285 to 302 (GILV…VSFW). 3 Solcar repeats span residues 14–103 (VAAW…FNRY), 110–195 (EARL…IRIY), and 210–310 (ELAT…AIHY).

This sequence belongs to the mitochondrial carrier (TC 2.A.29) family.

It is found in the mitochondrion inner membrane. Mitochondrial transporter that mediates uptake of thiamine pyrophosphate (ThPP) into mitochondria. This is Mitochondrial thiamine pyrophosphate carrier 1 (TPC1) from Saccharomyces cerevisiae (strain YJM789) (Baker's yeast).